Consider the following 210-residue polypeptide: RNA chaperone ProQ (210 aa).

Basic and acidic residues-rich tracts occupy residues 103–124 and 132–144; these read LKESKERVFASRRTNNKEEKAK and RKADAAAKSDKPK. The interval 103–148 is disordered; that stretch reads LKESKERVFASRRTNNKEEKAKQPRRPAPRKADAAAKSDKPKAAPK.

This sequence belongs to the ProQ family.

It is found in the cytoplasm. Its function is as follows. RNA chaperone with significant RNA binding, RNA strand exchange and RNA duplexing activities. In Aeromonas salmonicida (strain A449), this protein is RNA chaperone ProQ.